Here is a 577-residue protein sequence, read N- to C-terminus: Arginine--tRNA ligase (577 aa).

Positions 122–132 (PNVAKEMHVGH) match the 'HIGH' region motif.

It belongs to the class-I aminoacyl-tRNA synthetase family. As to quaternary structure, monomer.

The protein resides in the cytoplasm. The enzyme catalyses tRNA(Arg) + L-arginine + ATP = L-arginyl-tRNA(Arg) + AMP + diphosphate. The chain is Arginine--tRNA ligase from Escherichia coli O6:K15:H31 (strain 536 / UPEC).